Consider the following 317-residue polypeptide: U5 small nuclear ribonucleoprotein TSSC4 (317 aa).

Acidic residues predominate over residues 1 to 19; that stretch reads MAETEAGLEADEPTEDDTL. The disordered stretch occupies residues 1-74; sequence MAETEAGLEA…PPTGTLTTAV (74 aa). The span at 20–37 shows a compositional bias: low complexity; that stretch reads PSDTVSLSDSDSDLSLPS. Phosphoserine occurs at positions 57, 64, 83, and 92. Residues 74–101 form a hom2; mediates interaction with the U5 snRNP complexes and required for spliceosomal tri-snRNP complex assembly region; sequence VQPFHLRGMSSTFSQRSHSIFDCLESAA. Positions 101-152 are disordered; the sequence is ARQAPCSAPQTSVSDNGSFRRPVTPPSQTPARGLSRVHGNTGPTRVLPVPDY. The span at 108-117 shows a compositional bias: polar residues; that stretch reads APQTSVSDNG. Thr124 bears the Phosphothreonine mark. Residues 146–300 form an interaction with SNRNP200 region; that stretch reads VLPVPDYVSH…SKKRSRDHFR (155 aa). A hom3; mediates interaction with the U5 snRNP complexes region spans residues 147 to 183; it reads LPVPDYVSHPERWTKYSLEDVSEASEQSNRDAALAFL. The hom4; necessary for interaction with the PRPF19 complex and required for spliceosomal tri-snRNP complex assembly stretch occupies residues 198–238; it reads FNQDPSSCGEGRVVFTKPVRDSEARAERKRVLKKGVGSGAG. N6-acetyllysine is present on Lys214. A disordered region spans residues 216–317; that stretch reads VRDSEARAER…GPGSERGPSV (102 aa). Over residues 240–250 the composition is skewed to low complexity; that stretch reads EAAVELAHLAG.

It belongs to the TSSC4 family. Interacts in a RNA-independent manner with distinct U5 snRNP-containing complexes, the mono-U5 snRNP and the post-splicing U5 snRNP-PRPF19 complex. Interacts with SNRNP200; the interaction is direct, excludes recruitment of C9ORF78 and WBP4 to SNRNP200 and negatively regulates its RNA helicase activity. Interacts with PRPF8; the interaction is direct. As to expression, expressed in placenta. Widely expressed in embryo and newborn.

It localises to the nucleus. The protein localises to the cytoplasm. Functionally, protein associated with the U5 snRNP, during its maturation and its post-splicing recycling and which is required for spliceosomal tri-snRNP complex assembly in the nucleus. Has a molecular sequestering activity and transiently hinders SNRNP200 binding sites for constitutive splicing factors that intervene later during the assembly of the spliceosome and splicing. Together with its molecular sequestering activity, may also function as a molecular adapter and placeholder, coordinating the assembly of the U5 snRNP and its association with the U4/U6 di-snRNP. This chain is U5 small nuclear ribonucleoprotein TSSC4, found in Mus musculus (Mouse).